A 257-amino-acid polypeptide reads, in one-letter code: MSTANGDLISSLYPPPPVYVKFFTTENLNKLQEWQRQQNDEEIETKQEEADDKDEKDNEKQNETQDTVPPGELRFLVPPQPPSGTHYRGYGNIWSFEDKLPSLKSANWEQLYKDDDESITSETKIKELHKLMDSLLLNFLELIGLASIDPSQYESKIKDISLILININHLLNTYRPHQSRESLIMLLRKQIDAKRASINQVEKVCSEVKQKLLKLTNIQDVYKKDSIVLPDNSDNSPMAENAESIKDEIIKKLLSEH.

Residues Glu-33–Arg-74 are disordered. A compositionally biased stretch (basic and acidic residues) spans Glu-44 to Glu-63.

The protein belongs to the Mediator complex subunit 7 family. Component of the Mediator complex.

Its subcellular location is the nucleus. In terms of biological role, component of the Mediator complex, a coactivator involved in the regulated transcription of nearly all RNA polymerase II-dependent genes. Mediator functions as a bridge to convey information from gene-specific regulatory proteins to the basal RNA polymerase II transcription machinery. Mediator is recruited to promoters by direct interactions with regulatory proteins and serves as a scaffold for the assembly of a functional preinitiation complex with RNA polymerase II and the general transcription factors. The chain is Mediator of RNA polymerase II transcription subunit 7 (MED7) from Scheffersomyces stipitis (strain ATCC 58785 / CBS 6054 / NBRC 10063 / NRRL Y-11545) (Yeast).